Consider the following 297-residue polypeptide: MRKKVRKAVIPAAGLGTRFLPATKAQPKEMLPIVDKPAIQYIVEEAAESGIEDILIITGRNKRSIEDHFDRSAELEFNLREKGKTETLKEMQQIADLANIHYIRQKEPLGLGHAVLCAEHFIGDEPFAVLLGDDIMVSETPALRQLMDVYDVYGTEVVGVQSVLPEDVSKYGIINTSGSQGHVYEVNDLVEKPSPEEAPSEIAVMGRYVLNSSIFSVLKTIGRGAGNEIQLTDALREVCRKEPIHARLLEGNRYDIGDKLGCFKASTEIGLMRPEMRSQLLAYLEDVIKRETKEMLR.

An N-terminal signal peptide occupies residues 1 to 27; the sequence is MRKKVRKAVIPAAGLGTRFLPATKAQP.

This sequence belongs to the UDPGP type 2 family. In terms of assembly, homodimer.

The enzyme catalyses alpha-D-glucose 1-phosphate + UTP + H(+) = UDP-alpha-D-glucose + diphosphate. Its pathway is glycolipid metabolism; diglucosyl-diacylglycerol biosynthesis. Its function is as follows. Catalyzes the formation of UDP-glucose from glucose-1-phosphate and UTP. This is an intermediate step in the biosynthesis of diglucosyl-diacylglycerol (Glc2-DAG), i.e. the predominant glycolipid found in B.subtilis membrane, which is also used as a membrane anchor for lipoteichoic acid (LTA). YngB contributes to wall teichoic acid (WTA) glucosylation and glycolipid formation under anaerobic fermentative growth conditions. Might also enter other glycosylation pathways, leading to the decorating of other cell envelope components with glucose residues under anaerobic or other growth conditions. This is UTP--glucose-1-phosphate uridylyltransferase YngB (yngB) from Bacillus subtilis (strain 168).